The primary structure comprises 236 residues: Small ribosomal subunit protein uS3 (236 aa).

The KH type-2 domain occupies 39–107; that stretch reads VRHFLMQKLS…PTQLNIAEVR (69 aa).

This sequence belongs to the universal ribosomal protein uS3 family. As to quaternary structure, part of the 30S ribosomal subunit. Forms a tight complex with proteins S10 and S14.

Binds the lower part of the 30S subunit head. Binds mRNA in the 70S ribosome, positioning it for translation. In Blochmanniella pennsylvanica (strain BPEN), this protein is Small ribosomal subunit protein uS3.